The sequence spans 806 residues: Acetyl-CoA decarbonylase/synthase complex subunit alpha 1 (806 aa).

6 residues coordinate [4Fe-4S] cluster: C73, C76, C77, C79, C84, and C94. H117 provides a ligand contact to CO. Residues H250, C278, and C323 each coordinate [Ni-4Fe-4S] cluster. 2 4Fe-4S ferredoxin-type domains span residues 407–436 (DEEFTNWVMKCADCGACMIACPEELDIPEA) and 446–475 (SYLDILHDQCIGCRRCEQVCKKEIPILNII). [4Fe-4S] cluster contacts are provided by C417, C420, C423, C427, C455, C458, C461, and C465. C523, C552, and C587 together coordinate [Ni-4Fe-4S] cluster.

The protein belongs to the Ni-containing carbon monoxide dehydrogenase family. As to quaternary structure, heterotetramer of two alpha and two epsilon subunits. The ACDS complex is made up of alpha, epsilon, beta, gamma and delta subunits with a probable stoichiometry of (alpha(2)epsilon(2))(4)-beta(8)-(gamma(1)delta(1))(8). [4Fe-4S] cluster is required as a cofactor. The cofactor is [Ni-4Fe-4S] cluster.

It catalyses the reaction CO + 2 oxidized [2Fe-2S]-[ferredoxin] + H2O = 2 reduced [2Fe-2S]-[ferredoxin] + CO2 + 2 H(+). It functions in the pathway one-carbon metabolism; methanogenesis from acetate. Carbon monoxide dehydrogenase activity is inhibited by KCN and is rapidly inactivated by O(2). Its function is as follows. Part of the ACDS complex that catalyzes the reversible cleavage of acetyl-CoA, allowing growth on acetate as sole source of carbon and energy. The alpha-epsilon subcomponent functions as a carbon monoxide dehydrogenase. This is Acetyl-CoA decarbonylase/synthase complex subunit alpha 1 from Methanosarcina barkeri (strain Fusaro / DSM 804).